Here is a 359-residue protein sequence, read N- to C-terminus: MIAAQAKLVYHLNKYYNEKCQSRKAAISKTIREVCKVVSDVLKEVEVQEPRFISSLNEMDNRFEGLEVISPTEFEVVLYLNQMGVFNFVDDGSLPGCAVLKLSDGRKRSMSLWVEFITASGYLSARKIRSRFQTLVAQAVDKCSYRDVVKMVADTSEVKLRIRDRYVVQITPAFKCTGIWPRSAAHWPLPHIPWPGPNRVAEVKAEGFNLLSKECYSLNGKQSSAESDAWVLQFAEAENRLLLGGCRKKCLSLLKTLRDRHLELPGQPLNNYHMKTLVSYECEKHPRESDWDENCLGDRLNGILLQLISCLQCRRCPHYFLPNLDLFQGKPHSALENAAKQTWRLAREILTNPKSLEKL.

Residues 23-24 (RK) and 63-66 (FEGL) contribute to the a ribonucleoside 5'-triphosphate site. Residues E73 and E75 each coordinate Mg(2+). Residues K248 and 252-255 (SLLK) each bind a ribonucleoside 5'-triphosphate.

Belongs to the mab-21 family. As to quaternary structure, monomer. Homodecamer; composed of 2 back to back homopentamers. The protein may exist as monomer in solution and oiligomerizes upon ligand binding.

It is found in the nucleus. In terms of biological role, putative nucleotidyltransferase required for several aspects of embryonic development including normal development of the eye. It is unclear whether it displays nucleotidyltransferase activity in vivo. Binds single-stranded RNA (ssRNA). This Danio rerio (Zebrafish) protein is Putative nucleotidyltransferase MAB21L1 (mab21l1).